Reading from the N-terminus, the 169-residue chain is Ribosome maturation factor RimM (169 aa).

The PRC barrel domain occupies 97–169 (EDEVYFKDLI…KIVVDWEYDY (73 aa)).

This sequence belongs to the RimM family. As to quaternary structure, binds ribosomal protein uS19.

The protein resides in the cytoplasm. In terms of biological role, an accessory protein needed during the final step in the assembly of 30S ribosomal subunit, possibly for assembly of the head region. Essential for efficient processing of 16S rRNA. May be needed both before and after RbfA during the maturation of 16S rRNA. It has affinity for free ribosomal 30S subunits but not for 70S ribosomes. The chain is Ribosome maturation factor RimM from Francisella tularensis subsp. holarctica (strain FTNF002-00 / FTA).